Consider the following 876-residue polypeptide: Phosphoenolpyruvate carboxylase (876 aa).

Residues H138 and K543 contribute to the active site.

It belongs to the PEPCase type 1 family. Mg(2+) serves as cofactor.

It carries out the reaction oxaloacetate + phosphate = phosphoenolpyruvate + hydrogencarbonate. In terms of biological role, forms oxaloacetate, a four-carbon dicarboxylic acid source for the tricarboxylic acid cycle. This is Phosphoenolpyruvate carboxylase from Pseudomonas fluorescens (strain ATCC BAA-477 / NRRL B-23932 / Pf-5).